The chain runs to 441 residues: Tubulin beta-1 chain (441 aa).

The GTP site is built by glutamine 11, glutamate 69, serine 138, glycine 142, threonine 143, glycine 144, asparagine 204, and asparagine 226. Glutamate 69 lines the Mg(2+) pocket.

It belongs to the tubulin family. As to quaternary structure, dimer of alpha and beta chains. A typical microtubule is a hollow water-filled tube with an outer diameter of 25 nm and an inner diameter of 15 nM. Alpha-beta heterodimers associate head-to-tail to form protofilaments running lengthwise along the microtubule wall with the beta-tubulin subunit facing the microtubule plus end conferring a structural polarity. Microtubules usually have 13 protofilaments but different protofilament numbers can be found in some organisms and specialized cells. Mg(2+) serves as cofactor. As to expression, expressed primarily in touch receptor neurons.

The protein localises to the cytoplasm. Its subcellular location is the cytoskeleton. TTubulin is the major constituent of microtubules, a cylinder consisting of laterally associated linear protofilaments composed of alpha- and beta-tubulin heterodimers. Microtubules grow by the addition of GTP-tubulin dimers to the microtubule end, where a stabilizing cap forms. Below the cap, tubulin dimers are in GDP-bound state, owing to GTPase activity of alpha-tubulin. Plays a role in mechanosensory transduction (touch sensitivity). Its function is as follows. Mec-7 beta-tubulin is required for the production of 15-protofilament microtubules. The polypeptide is Tubulin beta-1 chain (mec-7) (Caenorhabditis elegans).